Consider the following 427-residue polypeptide: MEDPFSLAILNPASNLSVPTQPSWSLNLTSEQGASVPGPHSPPRGPPSHRIHLVFLGIILVAAVAGNTTVLCRLCGGSSGPWPGPKRRKMDFLLVQLAAADLYASGGTALSQLAWELLGDPRPALGDLACRLSHLLQASGRGASAHLVALIALERQLAVRIPQGPQLPARALAALSWLLALLLALPPTFVVRWDAPPSSTANAWPGKHCCRGIFAPLPRWHLQVYALYEAIVGFAAPVALLGFSCGHLLCVWWQRGSQAPVARMPWSPSMARASLPSALPQAKVQSLKMSLALALLFVGCDLPYFAARLAAAWSSKPAGDWERESLVAAMRVLEVANSAINPLIYLFFQAGDCRLWRRLRRRLGVLCCVREEEADISEWAGDHQALHRHRWPHPHYHHARREERNQGCLRPPPPRPRPPPCSCESAF.

Residues 1-3 (MED) are Extracellular-facing. A helical membrane pass occupies residues 4 to 24 (PFSLAILNPASNLSVPTQPSW). The Cytoplasmic portion of the chain corresponds to 25-50 (SLNLTSEQGASVPGPHSPPRGPPSHR). The helical transmembrane segment at 51–71 (IHLVFLGIILVAAVAGNTTVL) threads the bilayer. Topologically, residues 72–89 (CRLCGGSSGPWPGPKRRK) are extracellular. A helical membrane pass occupies residues 90-110 (MDFLLVQLAAADLYASGGTAL). The Cytoplasmic portion of the chain corresponds to 111–170 (SQLAWELLGDPRPALGDLACRLSHLLQASGRGASAHLVALIALERQLAVRIPQGPQLPAR). The helical transmembrane segment at 171–191 (ALAALSWLLALLLALPPTFVV) threads the bilayer. At 192 to 230 (RWDAPPSSTANAWPGKHCCRGIFAPLPRWHLQVYALYEA) the chain is on the extracellular side. Residues 231-251 (IVGFAAPVALLGFSCGHLLCV) form a helical membrane-spanning segment. Residues 252–286 (WWQRGSQAPVARMPWSPSMARASLPSALPQAKVQS) lie on the Cytoplasmic side of the membrane. A helical transmembrane segment spans residues 287–307 (LKMSLALALLFVGCDLPYFAA). Residues 308–327 (RLAAAWSSKPAGDWERESLV) are Extracellular-facing. A helical transmembrane segment spans residues 328–348 (AAMRVLEVANSAINPLIYLFF). Residues 349–427 (QAGDCRLWRR…PPPCSCESAF (79 aa)) lie on the Cytoplasmic side of the membrane. Positions 402–427 (EERNQGCLRPPPPRPRPPPCSCESAF) are disordered. The segment covering 410 to 421 (RPPPPRPRPPPC) has biased composition (pro residues).

This sequence belongs to the G-protein coupled receptor 1 family.

It localises to the cell membrane. Its function is as follows. Orphan receptor. In Mus musculus (Mouse), this protein is Probable G-protein coupled receptor 150 (Gpr150).